A 33-amino-acid chain; its full sequence is Photosystem II reaction center protein Psb30 (33 aa).

The chain crosses the membrane as a helical span at residues 5 to 25 (VIAQLTMLTIAVITGPLVIFF).

This sequence belongs to the Psb30/Ycf12 family. PSII is composed of 1 copy each of membrane proteins PsbA, PsbB, PsbC, PsbD, PsbE, PsbF, PsbH, PsbI, PsbJ, PsbK, PsbL, PsbM, PsbT, PsbX, PsbY, PsbZ, Psb30/Ycf12, peripheral proteins of the oxygen-evolving complex and a large number of cofactors. It forms dimeric complexes.

Its subcellular location is the plastid. It is found in the chloroplast thylakoid membrane. Its function is as follows. A core subunit of photosystem II (PSII), probably helps stabilize the reaction center. In Welwitschia mirabilis (Tree tumbo), this protein is Photosystem II reaction center protein Psb30.